Consider the following 271-residue polypeptide: Formamidopyrimidine-DNA glycosylase (271 aa).

The active-site Schiff-base intermediate with DNA is the Pro-2. Residue Glu-3 is the Proton donor of the active site. Lys-58 functions as the Proton donor; for beta-elimination activity in the catalytic mechanism. 3 residues coordinate DNA: His-92, Arg-111, and Lys-152. The segment at 237–271 adopts an FPG-type zinc-finger fold; the sequence is YVYGKVQKPCKICNNIITLIRQNGRSTYFCNACQN. Arg-261 (proton donor; for delta-elimination activity) is an active-site residue.

The protein belongs to the FPG family. As to quaternary structure, monomer. It depends on Zn(2+) as a cofactor.

The enzyme catalyses Hydrolysis of DNA containing ring-opened 7-methylguanine residues, releasing 2,6-diamino-4-hydroxy-5-(N-methyl)formamidopyrimidine.. It carries out the reaction 2'-deoxyribonucleotide-(2'-deoxyribose 5'-phosphate)-2'-deoxyribonucleotide-DNA = a 3'-end 2'-deoxyribonucleotide-(2,3-dehydro-2,3-deoxyribose 5'-phosphate)-DNA + a 5'-end 5'-phospho-2'-deoxyribonucleoside-DNA + H(+). In terms of biological role, involved in base excision repair of DNA damaged by oxidation or by mutagenic agents. Acts as a DNA glycosylase that recognizes and removes damaged bases. Has a preference for oxidized purines, such as 7,8-dihydro-8-oxoguanine (8-oxoG). Has AP (apurinic/apyrimidinic) lyase activity and introduces nicks in the DNA strand. Cleaves the DNA backbone by beta-delta elimination to generate a single-strand break at the site of the removed base with both 3'- and 5'-phosphates. In Wolbachia pipientis wMel, this protein is Formamidopyrimidine-DNA glycosylase.